A 260-amino-acid polypeptide reads, in one-letter code: Probable carbohydrate esterase At4g34215 (260 aa).

Residues 1–22 are disordered; it reads MEGGSITPGEDKPEIQSPIPPN. Residues S31, D235, and H238 contribute to the active site.

Belongs to the carbohydrate esterase 6 family.

The protein is Probable carbohydrate esterase At4g34215 of Arabidopsis thaliana (Mouse-ear cress).